The following is a 1816-amino-acid chain: Laminin subunit alpha-4 (1816 aa).

Residues 1-24 (MGWSTAWCSVLALWLLWCAVCSNA) form the signal peptide. Ser-39 is a glycosylation site (O-linked (Xyl...) (chondroitin sulfate) serine). Disulfide bonds link Cys-82-Cys-91, Cys-84-Cys-98, Cys-101-Cys-110, Cys-113-Cys-129, Cys-132-Cys-146, Cys-134-Cys-155, Cys-157-Cys-166, Cys-169-Cys-184, Cys-187-Cys-202, Cys-189-Cys-209, Cys-212-Cys-221, and Cys-224-Cys-238. 3 consecutive Laminin EGF-like domains span residues 82–131 (CDCN…FCQP), 132–186 (CPCP…TCKK), and 187–240 (CDCS…NCAV). Asn-104 is a glycosylation site (N-linked (GlcNAc...) asparagine). An N-linked (GlcNAc...) asparagine glycan is attached at Asn-215. A Laminin EGF-like 4; truncated domain is found at 241–255 (CNCGGGPCDSVTGEC). The segment at 256 to 825 (LEEGFEVPTG…AQTRSVASKI (570 aa)) is domain II and I. Residues Asn-308, Asn-333, Asn-458, Asn-550, Asn-571, Asn-574, Asn-631, and Asn-639 are each glycosylated (N-linked (GlcNAc...) asparagine). Residues 431–523 (THRELVDEEA…ERVKEQMEVV (93 aa)) adopt a coiled-coil conformation. The stretch at 556–604 (AEIDGAKNELQGKLSNLSNLSHDLVQEATDHAYNLQQEADELSRNLHSS) forms a coiled coil. A coiled-coil region spans residues 655–717 (IIYHKDESDN…AVKQLQAAER (63 aa)). A Cell attachment site motif is present at residues 717 to 719 (RGD). Asn-735, Asn-751, Asn-754, Asn-780, and Asn-803 each carry an N-linked (GlcNAc...) asparagine glycan. Residues 770 to 799 (AVDSARDAVRNLTEVVPQLLDQLRTVEQKR) adopt a coiled-coil conformation. 3 Laminin G-like domains span residues 826 to 1030 (QVSM…SVPC), 1042 to 1222 (AASY…GYGC), and 1229 to 1397 (SRRA…LYEC). An intrachain disulfide couples Cys-1000 to Cys-1030. Asn-1088 carries N-linked (GlcNAc...) asparagine glycosylation. A disulfide bond links Cys-1196 and Cys-1222. Asn-1283 and Asn-1361 each carry an N-linked (GlcNAc...) asparagine glycan. An intrachain disulfide couples Cys-1365 to Cys-1397. The span at 1409 to 1419 (KKGKNSSKPKT) shows a compositional bias: basic residues. The interval 1409-1433 (KKGKNSSKPKTNKQGEKSKDAPSWD) is disordered. Positions 1421-1430 (KQGEKSKDAP) are enriched in basic and acidic residues. Laminin G-like domains lie at 1462-1633 (AYQY…VTPC) and 1640-1813 (TGTY…INSC). 2 disulfide bridges follow: Cys-1610-Cys-1633 and Cys-1785-Cys-1813.

As to quaternary structure, laminin is a complex glycoprotein, consisting of three different polypeptide chains (alpha, beta, gamma), which are bound to each other by disulfide bonds into a cross-shaped molecule comprising one long and three short arms with globules at each end. Alpha-4 is a subunit of laminin-8 (laminin-411), laminin-9 (laminin-421) and laminin-14 (laminin-423). Strongly expressed in peripheral nerves, cardiac muscle, fat, dermis, lung stroma, aortic endothelium, endocardium and endothelium of blood vessels in skin and brain.

The protein localises to the secreted. It localises to the extracellular space. It is found in the extracellular matrix. The protein resides in the basement membrane. In terms of biological role, binding to cells via a high affinity receptor, laminin is thought to mediate the attachment, migration and organization of cells into tissues during embryonic development by interacting with other extracellular matrix components. In Mus musculus (Mouse), this protein is Laminin subunit alpha-4 (Lama4).